Consider the following 165-residue polypeptide: Phosphopantetheine adenylyltransferase (165 aa).

Threonine 9 contacts substrate. Residues 9–10 (TF) and histidine 17 each bind ATP. Residues lysine 41, leucine 73, and arginine 87 each coordinate substrate. Residues 88 to 90 (GLR), glutamate 98, and 123 to 129 (YQFISGT) each bind ATP.

This sequence belongs to the bacterial CoaD family. As to quaternary structure, homohexamer. Requires Mg(2+) as cofactor.

It localises to the cytoplasm. The enzyme catalyses (R)-4'-phosphopantetheine + ATP + H(+) = 3'-dephospho-CoA + diphosphate. The protein operates within cofactor biosynthesis; coenzyme A biosynthesis; CoA from (R)-pantothenate: step 4/5. Reversibly transfers an adenylyl group from ATP to 4'-phosphopantetheine, yielding dephospho-CoA (dPCoA) and pyrophosphate. This chain is Phosphopantetheine adenylyltransferase, found in Burkholderia orbicola (strain MC0-3).